We begin with the raw amino-acid sequence, 98 residues long: Large ribosomal subunit protein bL21 (98 aa).

This sequence belongs to the bacterial ribosomal protein bL21 family. Part of the 50S ribosomal subunit. Contacts protein L20.

Its function is as follows. This protein binds to 23S rRNA in the presence of protein L20. This Aquifex aeolicus (strain VF5) protein is Large ribosomal subunit protein bL21.